A 301-amino-acid chain; its full sequence is Glycine--tRNA ligase alpha subunit (301 aa).

The protein belongs to the class-II aminoacyl-tRNA synthetase family. As to quaternary structure, tetramer of two alpha and two beta subunits.

The protein resides in the cytoplasm. The catalysed reaction is tRNA(Gly) + glycine + ATP = glycyl-tRNA(Gly) + AMP + diphosphate. The sequence is that of Glycine--tRNA ligase alpha subunit from Actinobacillus pleuropneumoniae serotype 5b (strain L20).